The primary structure comprises 192 residues: Peptidyl-tRNA hydrolase (192 aa).

A tRNA-binding site is contributed by Y17. The active-site Proton acceptor is the H22. Residues F68, N70, and N116 each contribute to the tRNA site.

This sequence belongs to the PTH family. As to quaternary structure, monomer.

The protein localises to the cytoplasm. The enzyme catalyses an N-acyl-L-alpha-aminoacyl-tRNA + H2O = an N-acyl-L-amino acid + a tRNA + H(+). Functionally, hydrolyzes ribosome-free peptidyl-tRNAs (with 1 or more amino acids incorporated), which drop off the ribosome during protein synthesis, or as a result of ribosome stalling. Its function is as follows. Catalyzes the release of premature peptidyl moieties from peptidyl-tRNA molecules trapped in stalled 50S ribosomal subunits, and thus maintains levels of free tRNAs and 50S ribosomes. The chain is Peptidyl-tRNA hydrolase from Xylella fastidiosa (strain M12).